Consider the following 1562-residue polypeptide: Cell wall protein RBR3 (1562 aa).

Positions 1-20 are cleaved as a signal peptide; that stretch reads MIIFRKSFFTFWLLLNSVLA. N-linked (GlcNAc...) asparagine glycosylation is present at N190. Residues 338–353 show a composition bias toward low complexity; it reads APGTNPTEYTTTITTT. The tract at residues 338–366 is disordered; it reads APGTNPTEYTTTITTTNSAGKPLTETGVV. N373 carries N-linked (GlcNAc...) asparagine glycosylation. 2 stretches are compositionally biased toward low complexity: residues 383 to 415 and 422 to 729; these read FPTSSSSSSSSSTVSSTAPSSSSTKPSSSSQPS and SSSK…ISAT. 3 disordered regions span residues 383–729, 1404–1424, and 1455–1486; these read FPTS…ISAT, GSGSDSGSGSGSGSGSGSSSN, and YSSGGSGNGVLPSGANNVGSNQTPTVSGGNSN. Residues N602, N679, and N705 are each glycosylated (N-linked (GlcNAc...) asparagine). Gly residues predominate over residues 1407 to 1419; the sequence is SDSGSGSGSGSGS. Residues 1468-1486 are compositionally biased toward polar residues; that stretch reads GANNVGSNQTPTVSGGNSN. N1538 carries the GPI-anchor amidated asparagine lipid modification. A propeptide spans 1539–1562 (removed in mature form); it reads SGSKFSVGKSAFIAIILTTFIGFI.

Belongs to the HYR1/IFF family. Post-translationally, the GPI-anchor is attached to the protein in the endoplasmic reticulum and serves to target the protein to the cell surface. There, the glucosamine-inositol phospholipid moiety is cleaved off and the GPI-modified mannoprotein is covalently attached via its lipidless GPI glycan remnant to the 1,6-beta-glucan of the outer cell wall layer.

Its subcellular location is the secreted. It is found in the cell wall. It localises to the membrane. GPI-anchored cell wall protein involved in cell wall organization, hyphal growth, as well as in host-fungal interaction and virulence. The chain is Cell wall protein RBR3 (RBR3) from Candida albicans (strain SC5314 / ATCC MYA-2876) (Yeast).